We begin with the raw amino-acid sequence, 270 residues long: Probable aquaporin NIP-type (270 aa).

A run of 2 helical transmembrane segments spans residues 45–65 (LIAEAIGTYFVIFAGCGSVAV) and 72–92 (VTFPGICVTWGLIVMVMVYTV). An NPA 1 motif is present at residues 101–103 (NPA). A run of 3 helical transmembrane segments spans residues 121–141 (LYIIAQLMGSILASGTLALLF), 160–180 (SLAIEIIISFLLMFVISGVAT), and 188–208 (VAGIAVGMTITLNVFVAGPIS). Residues 213 to 215 (NPA) carry the NPA 2 motif. A helical membrane pass occupies residues 231 to 251 (WVYVVGPIIGTLAGAFVYNLI).

It belongs to the MIP/aquaporin (TC 1.A.8) family. NIP (TC 1.A.8.12) subfamily. As to expression, pollen specific.

The protein localises to the membrane. Functionally, aquaporins facilitate the transport of water and small neutral solutes across cell membranes. The protein is Probable aquaporin NIP-type of Nicotiana alata (Winged tobacco).